Here is an 888-residue protein sequence, read N- to C-terminus: MGRVPLAWWLALCCWGCAAHKDTQTEAGSPFVGNPGNITGARGLTGTLRCELQVQGEPPEVVWLRDGQILELADNTQTQVPLGEDWQDEWKVVSQLRISALQLSDAGEYQCMVHLEGRTFVSQPGFVGLEGLPYFLEEPEDKAVPANTPFNLSCQAQGPPEPVTLLWLQDAVPLAPVTGHSSQHSLQTPGLNKTSSFSCEAHNAKGVTTSRTATITVLPQRPHHLHVVSRQPTELEVAWTPGLSGIYPLTHCNLQAVLSDDGVGIWLGKSDPPEDPLTLQVSVPPHQLRLEKLLPHTPYHIRISCSSSQGPSPWTHWLPVETTEGVPLGPPENVSAMRNGSQVLVRWQEPRVPLQGTLLGYRLAYRGQDTPEVLMDIGLTREVTLELRGDRPVANLTVSVTAYTSAGDGPWSLPVPLEPWRPGQGQPLHHLVSEPPPRAFSWPWWYVLLGALVAAACVLILALFLVHRRKKETRYGEVFEPTVERGELVVRYRVRKSYSRRTTEATLNSLGISEELKEKLRDVMVDRHKVALGKTLGEGEFGAVMEGQLNQDDSILKVAVKTMKIAICTRSELEDFLSEAVCMKEFDHPNVMRLIGVCFQGSDREGFPEPVVILPFMKHGDLHSFLLYSRLGDQPVFLPTQMLVKFMADIASGMEYLSTKRFIHRDLAARNCMLNENMSVCVADFGLSKKIYNGDYYRQGRIAKMPVKWIAIESLADRVYTSKSDVWSFGVTMWEIATRGQTPYPGVENSEIYDYLRQGNRLKQPVDCLDGLYALMSRCWELNPRDRPSFAELREDLENTLKALPPAQEPDEILYVNMDEGGSHLEPRGAAGGADPPTQPDPKDSCSCLTAADVHSAGRYVLCPSTAPGPTLSADRGCPAPPGQEDGA.

An N-terminal signal peptide occupies residues 1-18 (MGRVPLAWWLALCCWGCA). An interaction with GAS6 region spans residues 19–86 (AHKDTQTEAG…QTQVPLGEDW (68 aa)). Topologically, residues 19–445 (AHKDTQTEAG…PPRAFSWPWW (427 aa)) are extracellular. Ig-like C2-type domains are found at residues 30 to 122 (PFVG…TFVS) and 133 to 216 (PYFL…ATIT). Asn37 carries an N-linked (GlcNAc...) asparagine glycan. A disulfide bridge connects residues Cys50 and Cys111. Residues Asn151 and Asn192 are each glycosylated (N-linked (GlcNAc...) asparagine). Cysteines 154 and 199 form a disulfide. Fibronectin type-III domains are found at residues 221-325 (RPHH…TTEG) and 330-422 (PPEN…PWRP). 3 N-linked (GlcNAc...) asparagine glycosylation sites follow: Asn333, Asn339, and Asn395. Residues 446–466 (YVLLGALVAAACVLILALFLV) form a helical membrane-spanning segment. Residues 467 to 888 (HRRKKETRYG…PAPPGQEDGA (422 aa)) are Cytoplasmic-facing. In terms of domain architecture, Protein kinase spans 530 to 801 (VALGKTLGEG…ELREDLENTL (272 aa)). ATP is bound by residues 536-544 (LGEGEFGAV) and Lys561. Asp666 serves as the catalytic Proton acceptor. Residues Tyr697, Tyr773, and Tyr815 each carry the phosphotyrosine; by autocatalysis modification. Positions 820-846 (EGGSHLEPRGAAGGADPPTQPDPKDSC) are disordered. Tyr860 carries the post-translational modification Phosphotyrosine; by autocatalysis. A disordered region spans residues 865 to 888 (STAPGPTLSADRGCPAPPGQEDGA).

Belongs to the protein kinase superfamily. Tyr protein kinase family. AXL/UFO subfamily. In terms of assembly, heterodimer and heterotetramer with ligand GAS6. Interacts with CBL, GRB2, LCK, NCK2, PIK3R1, PIK3R2, PIK3R3, PLCG1, SOCS1 and TNS2. Part of a complex including AXL, TNK2 and GRB2, in which GRB2 promotes AXL recruitment by TNK2. Post-translationally, monoubiquitinated upon GAS6-binding. A very small proportion of the receptor could be subjected to polyubiquitination in a very transient fashion. In terms of processing, phosphorylated at tyrosine residues by autocatalysis, which activates kinase activity. In distinct substructures of a broad spectrum of developing tissues (in the late embryogenesis). In cells forming organ capsules as well as in connective tissue structures (in adult).

It localises to the cell membrane. It carries out the reaction L-tyrosyl-[protein] + ATP = O-phospho-L-tyrosyl-[protein] + ADP + H(+). Activated by GAS6-binding and subsequent autophosphorylation. Functionally, receptor tyrosine kinase that transduces signals from the extracellular matrix into the cytoplasm by binding growth factor GAS6 and which is thus regulating many physiological processes including cell survival, cell proliferation, migration and differentiation. Ligand binding at the cell surface induces dimerization and autophosphorylation of AXL. Following activation by ligand, AXL binds and induces tyrosine phosphorylation of PI3-kinase subunits PIK3R1, PIK3R2 and PIK3R3; but also GRB2, PLCG1, LCK and PTPN11. Other downstream substrate candidates for AXL are CBL, NCK2, SOCS1 and TNS2. Recruitment of GRB2 and phosphatidylinositol 3 kinase regulatory subunits by AXL leads to the downstream activation of the AKT kinase. GAS6/AXL signaling plays a role in various processes such as endothelial cell survival during acidification by preventing apoptosis, optimal cytokine signaling during human natural killer cell development, hepatic regeneration, gonadotropin-releasing hormone neuron survival and migration, platelet activation, or regulation of thrombotic responses. Also plays an important role in inhibition of Toll-like receptors (TLRs)-mediated innate immune response. In Mus musculus (Mouse), this protein is Tyrosine-protein kinase receptor UFO (Axl).